We begin with the raw amino-acid sequence, 98 residues long: Ubiquitin-related modifier 1 (98 aa).

Residue Gly98 is modified to 1-thioglycine. A Glycyl lysine isopeptide (Gly-Lys) (interchain with K-? in acceptor proteins) cross-link involves residue Gly98.

Belongs to the URM1 family. Post-translationally, C-terminal thiocarboxylation occurs in 2 steps, it is first acyl-adenylated (-COAMP) via the hesA/moeB/thiF part of UBA4, then thiocarboxylated (-COSH) via the rhodanese domain of UBA4.

It localises to the cytoplasm. It participates in tRNA modification; 5-methoxycarbonylmethyl-2-thiouridine-tRNA biosynthesis. Functionally, acts as a sulfur carrier required for 2-thiolation of mcm(5)S(2)U at tRNA wobble positions of cytosolic tRNA(Lys), tRNA(Glu) and tRNA(Gln). Serves as sulfur donor in tRNA 2-thiolation reaction by being thiocarboxylated (-COSH) at its C-terminus by the MOCS3 homolog UBA4. The sulfur is then transferred to tRNA to form 2-thiolation of mcm(5)S(2)U. Prior mcm(5) tRNA modification by the elongator complex is required for 2-thiolation. Also acts as a ubiquitin-like protein (UBL) that is covalently conjugated via an isopeptide bond to lysine residues of target proteins such as AHP1. The thiocarboxylated form serves as substrate for conjugation and oxidative stress specifically induces the formation of UBL-protein conjugates. The protein is Ubiquitin-related modifier 1 of Candida glabrata (strain ATCC 2001 / BCRC 20586 / JCM 3761 / NBRC 0622 / NRRL Y-65 / CBS 138) (Yeast).